Consider the following 407-residue polypeptide: MSNVYDILKERGYIKQLTHEEEIRELLGKEKISFYIGFDPTADSLHVGHFLQMMVMAHMQKAGHRPIALVGGGTGMIGDPTGKTDMRKMMTKEQIEHNCNCFKKQLAKIIDFSEDKAIMVNNADWLLNLNYIEFLREIGVHFSVNKMLTAECFKSRLEKGLSFLEFNYMLMQGYDFLELNRKYNCVMELGGDDQWSNILAGVDLIRRKESKSAYGMTFTLLTNSEGKKMGKTESGALWLDPEKTSPYEFYQYWRNVADADVEKCLRLITFLPMDEVRRLSSLEGAEINEAKKVLAFEVTKLIHGEEEAQKAKIAAEALFGGNAKDLGNMPTAYIDKNDLNNLLVDLLVKCEILPSKSEARRLIKQGGLYLNDEKVTDMNLVVTEEHVTEDGIMIRRGKKNFNRIVVE.

Residue Tyr35 coordinates L-tyrosine. The short motif at 40 to 49 (PTADSLHVGH) is the 'HIGH' region element. Positions 168 and 172 each coordinate L-tyrosine. The 'KMSKS' region signature appears at 228–232 (KMGKT). Lys231 provides a ligand contact to ATP. Residues 341 to 405 (NLLVDLLVKC…RGKKNFNRIV (65 aa)) form the S4 RNA-binding domain.

The protein belongs to the class-I aminoacyl-tRNA synthetase family. TyrS type 1 subfamily. As to quaternary structure, homodimer.

It localises to the cytoplasm. The catalysed reaction is tRNA(Tyr) + L-tyrosine + ATP = L-tyrosyl-tRNA(Tyr) + AMP + diphosphate + H(+). Catalyzes the attachment of tyrosine to tRNA(Tyr) in a two-step reaction: tyrosine is first activated by ATP to form Tyr-AMP and then transferred to the acceptor end of tRNA(Tyr). The polypeptide is Tyrosine--tRNA ligase (Clostridium botulinum (strain ATCC 19397 / Type A)).